We begin with the raw amino-acid sequence, 305 residues long: Homoserine O-acetyltransferase (305 aa).

Cys132 (acyl-thioester intermediate) is an active-site residue. Positions 153 and 181 each coordinate substrate. The active-site Proton acceptor is the His221. Glu223 is an active-site residue. Arg235 contributes to the substrate binding site.

It belongs to the MetA family.

The protein resides in the cytoplasm. The catalysed reaction is L-homoserine + acetyl-CoA = O-acetyl-L-homoserine + CoA. It participates in amino-acid biosynthesis; L-methionine biosynthesis via de novo pathway; O-acetyl-L-homoserine from L-homoserine: step 1/1. Its function is as follows. Transfers an acetyl group from acetyl-CoA to L-homoserine, forming acetyl-L-homoserine. This is Homoserine O-acetyltransferase from Leuconostoc mesenteroides subsp. mesenteroides (strain ATCC 8293 / DSM 20343 / BCRC 11652 / CCM 1803 / JCM 6124 / NCDO 523 / NBRC 100496 / NCIMB 8023 / NCTC 12954 / NRRL B-1118 / 37Y).